Here is a 183-residue protein sequence, read N- to C-terminus: Small ribosomal subunit protein cS23y (183 aa).

It belongs to the chloroplast-specific ribosomal protein cS23 family. In terms of assembly, part of the 30S ribosomal subunit.

The protein localises to the plastid. The protein resides in the chloroplast. Its function is as follows. Component of the chloroplast ribosome (chloro-ribosome), a dedicated translation machinery responsible for the synthesis of chloroplast genome-encoded proteins, including proteins of the transcription and translation machinery and components of the photosynthetic apparatus. This Arabidopsis thaliana (Mouse-ear cress) protein is Small ribosomal subunit protein cS23y.